The primary structure comprises 506 residues: Glucosidase 2 subunit beta (506 aa).

The N-terminal stretch at Met-1–Ala-23 is a signal peptide. Cys-86 and Cys-108 are disulfide-bonded. Coiled coils occupy residues Ser-172–Thr-243 and Glu-338–His-374. Residues Glu-279–Pro-474 form the MRH domain. 2 cysteine pairs are disulfide-bonded: Cys-431-Cys-460 and Cys-445-Cys-472. Positions Val-503–Leu-506 match the ER retrieval sequence motif.

In terms of assembly, heterodimer of a catalytic subunit alpha (gls2) and a subunit beta (gtb1).

Its subcellular location is the endoplasmic reticulum. Its function is as follows. Subunit of glucosidase 2, which cleaves sequentially the 2 innermost alpha-1,3-linked glucose residues from the Glc(2)Man(9)GlcNAc(2) oligosaccharide precursor of immature glycoproteins in the endoplasmic reticulum (ER). Specifically required for the cleavage of the final glucose. The subunit beta retains the catalytic subunit alpha in the ER. The protein is Glucosidase 2 subunit beta (gtb1) of Schizosaccharomyces pombe (strain 972 / ATCC 24843) (Fission yeast).